Here is a 496-residue protein sequence, read N- to C-terminus: Glycerol kinase (496 aa).

Position 12 (Thr-12) interacts with ADP. ATP is bound by residues Thr-12, Thr-13, and Ser-14. A sn-glycerol 3-phosphate-binding site is contributed by Thr-12. Arg-16 lines the ADP pocket. Residues Arg-82, Glu-83, and Tyr-134 each coordinate sn-glycerol 3-phosphate. Glycerol contacts are provided by Arg-82, Glu-83, and Tyr-134. A Phosphohistidine; by HPr modification is found at His-230. Asp-244 lines the sn-glycerol 3-phosphate pocket. Glycerol-binding residues include Asp-244 and Gln-245. Positions 266 and 309 each coordinate ADP. Thr-266, Gly-309, Gln-313, and Gly-410 together coordinate ATP. Residues Gly-410 and Asn-414 each contribute to the ADP site.

It belongs to the FGGY kinase family. In terms of assembly, homotetramer and homodimer (in equilibrium). The phosphoenolpyruvate-dependent sugar phosphotransferase system (PTS), including enzyme I, and histidine-containing protein (HPr) are required for the phosphorylation, which leads to the activation of the enzyme.

It carries out the reaction glycerol + ATP = sn-glycerol 3-phosphate + ADP + H(+). Its pathway is polyol metabolism; glycerol degradation via glycerol kinase pathway; sn-glycerol 3-phosphate from glycerol: step 1/1. With respect to regulation, activated by phosphorylation and inhibited by fructose 1,6-bisphosphate (FBP). Its function is as follows. Key enzyme in the regulation of glycerol uptake and metabolism. Catalyzes the phosphorylation of glycerol to yield sn-glycerol 3-phosphate. The polypeptide is Glycerol kinase (Bacillus cereus (strain ATCC 14579 / DSM 31 / CCUG 7414 / JCM 2152 / NBRC 15305 / NCIMB 9373 / NCTC 2599 / NRRL B-3711)).